A 654-amino-acid polypeptide reads, in one-letter code: Probable Xaa-Pro aminopeptidase P (654 aa).

Residues Asp449, Asp460, Glu558, and Glu572 each coordinate Mn(2+).

The protein belongs to the peptidase M24B family. Mn(2+) is required as a cofactor.

The catalysed reaction is Release of any N-terminal amino acid, including proline, that is linked to proline, even from a dipeptide or tripeptide.. In terms of biological role, catalyzes the removal of a penultimate prolyl residue from the N-termini of peptides. This is Probable Xaa-Pro aminopeptidase P (ampp) from Neosartorya fischeri (strain ATCC 1020 / DSM 3700 / CBS 544.65 / FGSC A1164 / JCM 1740 / NRRL 181 / WB 181) (Aspergillus fischerianus).